The sequence spans 115 residues: MASRRSCADVEELEKELQKLKIENKALKKKLVQHTSPEDELLTPAQKDAIINSTVNKLTKKAEEKIRERVLKDVLPLVSKNQCMEAIAHIKYRIDVSIDETYNLSRRPASKPRTK.

Belongs to the herpesviridae BLRF2 family.

This is an uncharacterized protein from Saimiriine herpesvirus 2 (strain 11) (SaHV-2).